Reading from the N-terminus, the 135-residue chain is Small ribosomal subunit protein uS8 (135 aa).

Belongs to the universal ribosomal protein uS8 family. As to quaternary structure, part of the 30S ribosomal subunit. Contacts proteins S5 and S12.

Functionally, one of the primary rRNA binding proteins, it binds directly to 16S rRNA central domain where it helps coordinate assembly of the platform of the 30S subunit. This Nocardioides sp. (strain ATCC BAA-499 / JS614) protein is Small ribosomal subunit protein uS8.